The sequence spans 511 residues: Limonoid UDP-glucosyltransferase (511 aa).

Residue H19 is the Proton acceptor of the active site. An anthocyanidin is bound at residue H19. Residues Q344, H359, W362, N363, S364, and E367 each coordinate UDP-alpha-D-glucose. G382 contributes to the an anthocyanidin binding site. D383 and Q384 together coordinate UDP-alpha-D-glucose.

The protein belongs to the UDP-glycosyltransferase family.

The enzyme catalyses limonin + UDP-alpha-D-glucose + H2O = limonin 17-beta-D-glucoside + UDP + 2 H(+). Its function is as follows. Involved in the glucosylation of limonoids. The protein is Limonoid UDP-glucosyltransferase of Citrus unshiu (Satsuma mandarin).